A 481-amino-acid polypeptide reads, in one-letter code: tRNA pseudouridine(38/39) synthase (481 aa).

Ala-2 is modified (N-acetylalanine). Asp-119 (nucleophile) is an active-site residue. Position 196 (Tyr-196) interacts with substrate.

The protein belongs to the tRNA pseudouridine synthase TruA family.

It is found in the nucleus. It catalyses the reaction uridine(38/39) in tRNA = pseudouridine(38/39) in tRNA. In terms of biological role, formation of pseudouridine at position 39 in the anticodon stem and loop of transfer RNAs. Also acts on position 38, but much less efficiently. The chain is tRNA pseudouridine(38/39) synthase (Pus3) from Mus musculus (Mouse).